Consider the following 190-residue polypeptide: Frataxin homolog, mitochondrial (190 aa).

Belongs to the frataxin family. As to quaternary structure, monomer (probable predominant form). Oligomer. Interacts with IscU. Component of the mitochondrial core iron-sulfur cluster (ISC) assembly complex at least composed of the cysteine desulfurase Nfs1, the scaffold protein IscU, the accessory protein bcn92/Isd11/Lyrm4, and probably fh/frataxin.

The protein resides in the mitochondrion. The enzyme catalyses 4 Fe(2+) + O2 + 4 H(+) = 4 Fe(3+) + 2 H2O. Promotes the biosynthesis of heme as well as the assembly and repair of iron-sulfur clusters by delivering Fe(2+) to proteins involved in these pathways. May play a role in the protection against iron-catalyzed oxidative stress through its ability to catalyze the oxidation of Fe(2+) to Fe(3+). May be able to store large amounts of the metal in the form of a ferrihydrite mineral by oligomerization. Required for ecdysteroidogenesis in the prothoracic gland which is necessary for larval to pupal transition. The chain is Frataxin homolog, mitochondrial from Drosophila melanogaster (Fruit fly).